The chain runs to 237 residues: Orotidine 5'-phosphate decarboxylase (237 aa).

Substrate contacts are provided by residues Asp11, Lys34, Asp61–Thr70, Thr123, Arg185, Gln194, Gly214, and Arg215. The Proton donor role is filled by Lys63.

Belongs to the OMP decarboxylase family. Type 1 subfamily. In terms of assembly, homodimer.

The enzyme catalyses orotidine 5'-phosphate + H(+) = UMP + CO2. The protein operates within pyrimidine metabolism; UMP biosynthesis via de novo pathway; UMP from orotate: step 2/2. In terms of biological role, catalyzes the decarboxylation of orotidine 5'-monophosphate (OMP) to uridine 5'-monophosphate (UMP). The protein is Orotidine 5'-phosphate decarboxylase of Ligilactobacillus salivarius (strain UCC118) (Lactobacillus salivarius).